Consider the following 250-residue polypeptide: Ribosomal RNA small subunit methyltransferase J (250 aa).

S-adenosyl-L-methionine is bound by residues 102-103 (RD), 118-119 (ER), 154-155 (SS), and D172.

Belongs to the methyltransferase superfamily. RsmJ family.

The protein localises to the cytoplasm. It catalyses the reaction guanosine(1516) in 16S rRNA + S-adenosyl-L-methionine = N(2)-methylguanosine(1516) in 16S rRNA + S-adenosyl-L-homocysteine + H(+). Functionally, specifically methylates the guanosine in position 1516 of 16S rRNA. The protein is Ribosomal RNA small subunit methyltransferase J of Edwardsiella ictaluri (strain 93-146).